The following is a 570-amino-acid chain: Urease subunit alpha (570 aa).

The Urease domain maps to 131–570 (GGVDTHIHFI…LPMAQRYFLF (440 aa)). Residues histidine 136, histidine 138, and lysine 219 each contribute to the Ni(2+) site. Lysine 219 carries the post-translational modification N6-carboxylysine. Residue histidine 221 coordinates substrate. Positions 248 and 274 each coordinate Ni(2+). Histidine 322 functions as the Proton donor in the catalytic mechanism. Aspartate 362 lines the Ni(2+) pocket.

This sequence belongs to the metallo-dependent hydrolases superfamily. Urease alpha subunit family. Heterotrimer of UreA (gamma), UreB (beta) and UreC (alpha) subunits. Three heterotrimers associate to form the active enzyme. It depends on Ni cation as a cofactor. In terms of processing, carboxylation allows a single lysine to coordinate two nickel ions.

The protein resides in the cytoplasm. The catalysed reaction is urea + 2 H2O + H(+) = hydrogencarbonate + 2 NH4(+). It participates in nitrogen metabolism; urea degradation; CO(2) and NH(3) from urea (urease route): step 1/1. This is Urease subunit alpha from Methylocella silvestris (strain DSM 15510 / CIP 108128 / LMG 27833 / NCIMB 13906 / BL2).